We begin with the raw amino-acid sequence, 229 residues long: 2-C-methyl-D-erythritol 4-phosphate cytidylyltransferase (229 aa).

The protein belongs to the IspD/TarI cytidylyltransferase family. IspD subfamily.

The enzyme catalyses 2-C-methyl-D-erythritol 4-phosphate + CTP + H(+) = 4-CDP-2-C-methyl-D-erythritol + diphosphate. It functions in the pathway isoprenoid biosynthesis; isopentenyl diphosphate biosynthesis via DXP pathway; isopentenyl diphosphate from 1-deoxy-D-xylulose 5-phosphate: step 2/6. In terms of biological role, catalyzes the formation of 4-diphosphocytidyl-2-C-methyl-D-erythritol from CTP and 2-C-methyl-D-erythritol 4-phosphate (MEP). The sequence is that of 2-C-methyl-D-erythritol 4-phosphate cytidylyltransferase from Neisseria meningitidis serogroup C (strain 053442).